The primary structure comprises 219 residues: Tegument protein UL14 (219 aa).

Positions 161–219 (ANGPSRIGSHPTYTPTPTGPPGAPAAPLSRTPPSPAPPTGPATDPASASGFARDYPDGE) are disordered. Over residues 177 to 200 (PTGPPGAPAAPLSRTPPSPAPPTG) the composition is skewed to pro residues.

It belongs to the alphaherpesvirinae HHV-1 UL14 protein family. As to quaternary structure, interacts with UL51. In terms of processing, phosphorylated.

The protein resides in the virion tegument. It localises to the host cytoplasm. It is found in the host nucleus. In terms of biological role, contributes to the nuclear transport of the viral transcriptional activator VP16 during the early phase of infection. Therefore, participates indirectly in the regulation of the immediate-early gene expression. Additionally, seems to be important for efficient nuclear targeting of capsids. The UL51-UL14 complex regulates final viral envelopment for efficient viral replication. The chain is Tegument protein UL14 from Human herpesvirus 1 (strain 17) (HHV-1).